The primary structure comprises 325 residues: MSTSERPPSPSSMAEDFAVEPLSPDFGFYLRTTELLAERHSPVQHIEIVQTPLFGRAMRIDGCFMTSEQDEFFYHEPMVHLPAITHGDPRQALVVGGGDGGTAYNLLRYPNMERVVLAELDRDVIDMARTWLPKVHRGAFEDPRLELHLGDGRAFTGNCKNQFDQIVLDLTDPFGPAISLYTRDFYRACRRALKPGGVLSLHIQSPIYRSPIMARLLASLRDVFGVVRPYLQYVPLYGTLWAMAMASDSADPLSLSATEIDARLTQNGLIDLKLYSGGTHHALLNLPPFVQTLLSEPAYPIDDGNSLDDINLDPREAGKLKLIQT.

The region spanning 11 to 248 is the PABS domain; the sequence is SSMAEDFAVE…TLWAMAMASD (238 aa). Gln-44 is an S-methyl-5'-thioadenosine binding site. Spermidine contacts are provided by His-75 and Asp-99. S-methyl-5'-thioadenosine-binding positions include Glu-119 and 151-152; that span reads DG. The Proton acceptor role is filled by Asp-169. Pro-176 contributes to the S-methyl-5'-thioadenosine binding site.

It belongs to the spermidine/spermine synthase family. As to quaternary structure, homodimer or homotetramer.

The protein resides in the cytoplasm. It catalyses the reaction S-adenosyl 3-(methylsulfanyl)propylamine + putrescine = S-methyl-5'-thioadenosine + spermidine + H(+). Its pathway is amine and polyamine biosynthesis; spermidine biosynthesis; spermidine from putrescine: step 1/1. Catalyzes the irreversible transfer of a propylamine group from the amino donor S-adenosylmethioninamine (decarboxy-AdoMet) to putrescine (1,4-diaminobutane) to yield spermidine. This is Polyamine aminopropyltransferase from Nitrosomonas europaea (strain ATCC 19718 / CIP 103999 / KCTC 2705 / NBRC 14298).